The following is a 346-amino-acid chain: DnaJ protein ERDJ3B (346 aa).

The signal sequence occupies residues Met-1–Ala-23. The J domain maps to Ser-26 to Gly-91. Asn-267 is a glycosylation site (N-linked (GlcNAc...) asparagine).

Interacts with SDF2 and MED37A/BIP1. N-glycosylated. As to expression, expressed in leaves, flower buds and flowers.

It localises to the endoplasmic reticulum lumen. Regulates protein folding in the endoplasmic reticulum (ER) lumen. Forms a complex in the ER with SDF2 and MED37A/BIP1 which is required for the proper accumulation and function of the surface-exposed leucine-rich repeat receptor kinases EFR involved in pathogen-associated molecular pattern (PAMP) triggered immunity. This chain is DnaJ protein ERDJ3B (ERDJ3B), found in Arabidopsis thaliana (Mouse-ear cress).